The chain runs to 186 residues: MGGTFDPIHHGHLVVASEVASRFCLDEVIFVPTGRPPHKKEVSDPWHRYLMAVIATASNQRFSVSKIDIERTGPTFTVDTLRELREQLPSSDLFFITGTDALARIFSWKDADTLWSLAHFVAVSRPGHEVVDIPNDRISFLEVPAMAISSSNCRERVRSGLPIWYLVPEGVVQYIAKHGLYRSLYG.

This sequence belongs to the NadD family.

It carries out the reaction nicotinate beta-D-ribonucleotide + ATP + H(+) = deamido-NAD(+) + diphosphate. It functions in the pathway cofactor biosynthesis; NAD(+) biosynthesis; deamido-NAD(+) from nicotinate D-ribonucleotide: step 1/1. Functionally, catalyzes the reversible adenylation of nicotinate mononucleotide (NaMN) to nicotinic acid adenine dinucleotide (NaAD). This chain is Probable nicotinate-nucleotide adenylyltransferase, found in Tropheryma whipplei (strain Twist) (Whipple's bacillus).